The primary structure comprises 280 residues: DegV domain-containing protein M6_Spy1440 (280 aa).

The region spanning Trp-3 to Ile-280 is the DegV domain. Positions 63 and 91 each coordinate hexadecanoate.

May bind long-chain fatty acids, such as palmitate, and may play a role in lipid transport or fatty acid metabolism. The polypeptide is DegV domain-containing protein M6_Spy1440 (Streptococcus pyogenes serotype M6 (strain ATCC BAA-946 / MGAS10394)).